Consider the following 418-residue polypeptide: Gamma-glutamyl phosphate reductase (418 aa).

This sequence belongs to the gamma-glutamyl phosphate reductase family.

The protein resides in the cytoplasm. The enzyme catalyses L-glutamate 5-semialdehyde + phosphate + NADP(+) = L-glutamyl 5-phosphate + NADPH + H(+). It participates in amino-acid biosynthesis; L-proline biosynthesis; L-glutamate 5-semialdehyde from L-glutamate: step 2/2. Its function is as follows. Catalyzes the NADPH-dependent reduction of L-glutamate 5-phosphate into L-glutamate 5-semialdehyde and phosphate. The product spontaneously undergoes cyclization to form 1-pyrroline-5-carboxylate. The chain is Gamma-glutamyl phosphate reductase from Chlorobium chlorochromatii (strain CaD3).